The chain runs to 703 residues: Capsid protein VP1 (703 aa).

Belongs to the caliciviridae capsid protein family. As to quaternary structure, homodimer. Homomultimer. Interacts with the minor capsid protein VP2. May bind to VP3 and Vpg proteins. In terms of processing, cleaved by the viral protease to produce mature capsid protein.

The protein resides in the virion. The protein localises to the host cytoplasm. In terms of biological role, capsid protein self assembles to form an icosahedral capsid with a T=3 symmetry, about 38 nm in diameter, and consisting of 180 capsid proteins. A smaller form of capsid with a diameter of 23 nm might be capsid proteins assembled as icosahedron with T=1 symmetry. The capsid encapsulates the genomic RNA and is decorated with VP2 proteins. The protein is Capsid protein VP1 of San Miguel sea lion virus serotype 4 (SMSV-4).